We begin with the raw amino-acid sequence, 372 residues long: DSC E3 ubiquitin ligase complex subunit 2 (372 aa).

The next 5 membrane-spanning stretches (helical) occupy residues 26 to 46 (VVAG…LHLL), 54 to 74 (ILLW…LFII), 95 to 115 (YMFI…SLLF), 126 to 146 (TFLI…TVFV), and 160 to 180 (VIPM…NAFL). Residues 246–314 (TENENQVENP…LPTGPASQLY (69 aa)) form a disordered region. The segment covering 249-268 (ENQVENPVSNADANDSPTRQ) has biased composition (polar residues). The residue at position 264 (Ser264) is a Phosphoserine. Thr266 bears the Phosphothreonine mark. A compositionally biased stretch (low complexity) spans 269–284 (NARATAIASSSNTAAS). A compositionally biased stretch (polar residues) spans 286-305 (RNRQQISHPPLGRTSSSSVL). One can recognise a UBA domain in the interval 332–368 (EDINTVQTIMQTSRAQAIQALSQTNDVQRAVELLLEQ).

In terms of assembly, component of the DSC E3 ubiquitin ligase complex composed of dsc1, dsc2, dsc3 and dsc4.

It is found in the golgi apparatus membrane. It carries out the reaction S-ubiquitinyl-[E2 ubiquitin-conjugating enzyme]-L-cysteine + [acceptor protein]-L-lysine = [E2 ubiquitin-conjugating enzyme]-L-cysteine + N(6)-ubiquitinyl-[acceptor protein]-L-lysine.. It participates in protein modification; protein ubiquitination. In terms of biological role, component of the DSC E3 ubiquitin ligase complex which is required for the sre1 transcriptional activator proteolytic cleavage to release the soluble transcription factor from the membrane in low oxygen or sterol conditions. The complex also plays an important role in the multivesicular body (MVB) pathway and functions in a post-endoplasmic reticulum pathway for protein degradation. This Schizosaccharomyces pombe (strain 972 / ATCC 24843) (Fission yeast) protein is DSC E3 ubiquitin ligase complex subunit 2 (dsc2).